The sequence spans 211 residues: Redox-sensing transcriptional repressor Rex (211 aa).

A DNA-binding region (H-T-H motif) is located at residues lysine 17–phenylalanine 56. Residue glycine 91 to glycine 96 coordinates NAD(+).

Belongs to the transcriptional regulatory Rex family. As to quaternary structure, homodimer.

It is found in the cytoplasm. Modulates transcription in response to changes in cellular NADH/NAD(+) redox state. The protein is Redox-sensing transcriptional repressor Rex of Clostridium beijerinckii (strain ATCC 51743 / NCIMB 8052) (Clostridium acetobutylicum).